Reading from the N-terminus, the 891-residue chain is Alanine--tRNA ligase (891 aa).

The Zn(2+) site is built by H564, H568, C678, and H682.

It belongs to the class-II aminoacyl-tRNA synthetase family. Zn(2+) serves as cofactor.

It localises to the cytoplasm. The catalysed reaction is tRNA(Ala) + L-alanine + ATP = L-alanyl-tRNA(Ala) + AMP + diphosphate. Functionally, catalyzes the attachment of alanine to tRNA(Ala) in a two-step reaction: alanine is first activated by ATP to form Ala-AMP and then transferred to the acceptor end of tRNA(Ala). Also edits incorrectly charged Ser-tRNA(Ala) and Gly-tRNA(Ala) via its editing domain. The chain is Alanine--tRNA ligase from Nitrobacter hamburgensis (strain DSM 10229 / NCIMB 13809 / X14).